Consider the following 47-residue polypeptide: uncharacterized protein (47 aa).

A helical transmembrane segment spans residues 28-45 (VMIWGCLPYFLYVLIRMF).

Its subcellular location is the cell membrane. This is an uncharacterized protein from Bacillus subtilis (strain 168).